A 401-amino-acid chain; its full sequence is Phosrestin-1 (401 aa).

It belongs to the arrestin family. In terms of tissue distribution, inner and outer segments, and the inner plexiform regions of the retina.

Undergoes light-induced phosphorylation, probably plays an important role in the photoreceptor transduction. In Drosophila miranda (Fruit fly), this protein is Phosrestin-1 (Arr2).